An 846-amino-acid chain; its full sequence is cGMP-dependent protein kinase (846 aa).

Residues 1 to 22 (MRCNERNKKKAIFSNDDFSGED) form an autoinhibitory segment region. CNMP-binding domain regions lie at residues 51–166 (VCST…FIDS), 169–268 (VFDM…IVLG), 288–391 (IFRQ…LGDN), and 411–510 (IFRY…LQII). 3',5'-cyclic GMP is bound by residues lysine 106, glycine 115, glutamate 116, alanine 118, arginine 125, and serine 126. Arginine 466, glycine 475, glutamate 476, alanine 478, arginine 485, and threonine 486 together coordinate 3',5'-cyclic GMP. Residues 534 to 791 (LETERIIGRG…FKDIKEHAFF (258 aa)) form the Protein kinase domain. ATP is bound by residues 540 to 548 (IGRGTFGTV) and lysine 563. The active-site Proton acceptor is aspartate 657. Residues 792–846 (GNFNWDKLAGRLLEPPLVSKGETYAEDIDIKQIEEEDALNEGEPLDGDDSWDVDF) form the AGC-kinase C-terminal domain. The disordered stretch occupies residues 824-846 (IEEEDALNEGEPLDGDDSWDVDF). Positions 825–846 (EEEDALNEGEPLDGDDSWDVDF) are enriched in acidic residues.

This sequence belongs to the protein kinase superfamily. AGC Ser/Thr protein kinase family. cGMP subfamily. As to quaternary structure, monomer. Mg(2+) is required as a cofactor. Post-translationally, autophosphorylated.

It is found in the cytoplasm. The protein localises to the endoplasmic reticulum membrane. The enzyme catalyses L-seryl-[protein] + ATP = O-phospho-L-seryl-[protein] + ADP + H(+). It catalyses the reaction L-threonyl-[protein] + ATP = O-phospho-L-threonyl-[protein] + ADP + H(+). With respect to regulation, activated by cGMP. Not activated by cAMP. cGMP binding allosterically triggers a conformational change at the alpha C-helix of cGMP-binding domain 4, which bridges the regulatory and catalytic domains, causing the capping triad, composed of Arg-477, Gln-525 and Asp-526, to form and stabilize the active conformation. The cGMP-binding domains acts cooperatively to activate PKG. Serine/threonine protein kinase which acts as a downstream effector of the second messenger cGMP. Controls the release of Ca(2+) from intracellular stores by regulating phosphoinositide biosynthesis. Ca(2+) signals are essential for merozoite and sporozoite invasion and egress from host hepatocytes and erythrocytes, and, in the mosquito vector, for gametocyte activation, and ookinete and sporozoite motility. During the host liver stage, regulates the initial invasion of host hepatocytes by sporozoites by regulating sporozoite motility and microneme exocytosis. Following parasite development in the hepatocytes, required for the release of merosomes, a vesicle containing the mature merozoites. During the asexual blood stage, required for the progression from schizont to the ring stage following merozoite invasion of host erythrocytes and for merozoite egress. Regulates merozoite egress by promoting the release of exonemes and micronemes which contain proteins essential for egress. Phosphorylates CDPK1 predominantly at the late schizont stage; phosphorylation at 'Ser-64' regulates CDPK1 protein-protein interaction and phosphorylation at 'Thr-231' may regulate CDPK1 kinase activity. In the mosquito vector, required for the initiation of gametogenesis induced by xanthurenic acid, specifically the gametocyte differentiation from the crescent-shaped form to the spherical form. Required for the gliding motility of ookinetes to reach and penetrate the midgut epithelium by promoting Ca(2+)-mediated activation of CDPK1 and CDPK4. Also required for microneme secretion in ookinete by promoting Ca(2+)-mediated activation of CDPK3. This chain is cGMP-dependent protein kinase, found in Plasmodium vivax (strain Salvador I).